The sequence spans 374 residues: tRNA-specific 2-thiouridylase MnmA (374 aa).

ATP contacts are provided by residues 13 to 20 and methionine 39; that span reads GMSGGVDS. An interaction with target base in tRNA region spans residues 99-101; it reads NPD. Catalysis depends on cysteine 104, which acts as the Nucleophile. Cysteine 104 and cysteine 201 form a disulfide bridge. Glycine 128 provides a ligand contact to ATP. Positions 151-153 are interaction with tRNA; that stretch reads KDQ. The active-site Cysteine persulfide intermediate is cysteine 201. The interaction with tRNA stretch occupies residues 313 to 314; that stretch reads RY.

It belongs to the MnmA/TRMU family.

The protein resides in the cytoplasm. The catalysed reaction is S-sulfanyl-L-cysteinyl-[protein] + uridine(34) in tRNA + AH2 + ATP = 2-thiouridine(34) in tRNA + L-cysteinyl-[protein] + A + AMP + diphosphate + H(+). Its function is as follows. Catalyzes the 2-thiolation of uridine at the wobble position (U34) of tRNA, leading to the formation of s(2)U34. The sequence is that of tRNA-specific 2-thiouridylase MnmA from Streptococcus equi subsp. zooepidemicus (strain H70).